Here is a 242-residue protein sequence, read N- to C-terminus: Beta-carotene ketolase (242 aa).

It carries out the reaction all-trans-beta-carotene + 2 AH2 + 2 O2 = echinenone + 2 A + 3 H2O. The catalysed reaction is echinenone + 2 AH2 + 2 O2 = canthaxanthin + 2 A + 3 H2O. Its pathway is carotenoid biosynthesis; astaxanthin biosynthesis. Functionally, converts beta-carotene to canthaxanthin via echinenone. This is Beta-carotene ketolase (crtW) from Paracoccus sp. (strain N81106 / MBIC 01143) (Agrobacterium aurantiacum).